We begin with the raw amino-acid sequence, 84 residues long: UPF0297 protein NT01CX_2279 (84 aa).

It belongs to the UPF0297 family.

This is UPF0297 protein NT01CX_2279 from Clostridium novyi (strain NT).